A 214-amino-acid chain; its full sequence is Adenylate kinase (214 aa).

Residue 10–15 (GAGKGT) coordinates ATP. Residues 30 to 59 (STGDMLRAAIKAGTELGKQAKAVIDAGQLV) are NMP. Residues Thr-31, Arg-36, 57-59 (QLV), 85-88 (GFPR), and Gln-92 each bind AMP. The interval 122 to 159 (GRRAHLPSGRTYHVVYNPPKVEGKDDVTGEDLVIREDD) is LID. ATP contacts are provided by residues Arg-123 and 132–133 (TY). AMP is bound by residues Arg-156 and Arg-167. Lys-200 contacts ATP.

It belongs to the adenylate kinase family. As to quaternary structure, monomer.

The protein localises to the cytoplasm. It carries out the reaction AMP + ATP = 2 ADP. Its pathway is purine metabolism; AMP biosynthesis via salvage pathway; AMP from ADP: step 1/1. Functionally, catalyzes the reversible transfer of the terminal phosphate group between ATP and AMP. Plays an important role in cellular energy homeostasis and in adenine nucleotide metabolism. The chain is Adenylate kinase from Vibrio cholerae serotype O1 (strain ATCC 39541 / Classical Ogawa 395 / O395).